A 195-amino-acid chain; its full sequence is Peroxiredoxin bcp1 (195 aa).

In terms of domain architecture, Thioredoxin spans 46 to 168 (IQVGDVIPDI…SHWIFEKGTG (123 aa)). Catalysis depends on C89, which acts as the Cysteine sulfenic acid (-SOH) intermediate. C89 and C94 are oxidised to a cystine.

Belongs to the peroxiredoxin family. BCP/PrxQ subfamily. Monomer. The active site is a conserved redox-active cysteine residue, the peroxidatic cysteine (C(P)), which makes the nucleophilic attack on the peroxide substrate. The peroxide oxidizes the C(P)-SH to cysteine sulfenic acid (C(P)-SOH), which then reacts with another cysteine residue, the resolving cysteine (C(R)), to form a disulfide bridge. The disulfide is subsequently reduced by an appropriate electron donor to complete the catalytic cycle. In this atypical 2-Cys peroxiredoxin, C(R) is present in the same subunit to form an intramolecular disulfide. The disulfide is subsequently reduced by thioredoxin.

The protein resides in the cytoplasm. Its subcellular location is the nucleus. The catalysed reaction is a hydroperoxide + [thioredoxin]-dithiol = an alcohol + [thioredoxin]-disulfide + H2O. Functionally, thiol-specific peroxidase that catalyzes the reduction of hydrogen peroxide and organic hydroperoxides to water and alcohols, respectively. Plays a role in cell protection against oxidative stress by detoxifying peroxides and as sensor of hydrogen peroxide-mediated signaling events. Acts as a scavenger of H(2)O(2). The polypeptide is Peroxiredoxin bcp1 (bcp1) (Schizosaccharomyces pombe (strain 972 / ATCC 24843) (Fission yeast)).